Consider the following 71-residue polypeptide: Biotinylated protein TB7.3 (71 aa).

The Biotinyl-binding domain maps to 2–71; the sequence is AEDVRAEIVA…QAGDLIAVIS (70 aa). An N6-biotinyllysine modification is found at K37.

This chain is Biotinylated protein TB7.3, found in Mycobacterium bovis (strain ATCC BAA-935 / AF2122/97).